Here is a 135-residue protein sequence, read N- to C-terminus: Probable transporter PD_1892 (135 aa).

4 helical membrane passes run 4-24 (YWYP…LLLL), 45-65 (AQNI…TVIF), 71-91 (VTVA…GLGT), and 114-134 (IVAT…MGVY).

This sequence belongs to the TsuA/YedE (TC 9.B.102) family.

It localises to the cell inner membrane. This Xylella fastidiosa (strain Temecula1 / ATCC 700964) protein is Probable transporter PD_1892.